We begin with the raw amino-acid sequence, 146 residues long: Large ribosomal subunit protein uL15 (146 aa).

The interval 1-66 (MKLHELKPAP…LQRRMPKRGF (66 aa)) is disordered. Gly residues-rich tracts occupy residues 21–31 (QGIGSGMGKTA) and 42–52 (SGGGVRPGFEG).

Belongs to the universal ribosomal protein uL15 family. As to quaternary structure, part of the 50S ribosomal subunit.

Functionally, binds to the 23S rRNA. The chain is Large ribosomal subunit protein uL15 from Pelotomaculum thermopropionicum (strain DSM 13744 / JCM 10971 / SI).